Reading from the N-terminus, the 348-residue chain is MTKPYGSSLDDHLDAEVAREPSLADTAATIRALAAAAIDVSETVGRGSLAGDLAAQGEHNSDGDVQKALDVIAHKRFMQALEEAPVAQVASEEAEDVVTLKAGAPLAVAIDPLDGSSNIGVGMVVGTIFGIRPVTPGEDPNASFLTPGTTQTAAGFVVYGPATTFVVTLGNGTRIFTLDRTDNVFRLTHDAMKIVPSASEYAINASNVRHWDGPVKSYIEDCLRGSEGPRDRDFNMRWTAALVADAQRVLIRGGVFLYPGDNRKGYAQGRLRLLYETAPIAFLIEQAGGGATDGQGRILERVAAKIHERSPLVFGSTEEVECVGKYYDGRQPSAGRSPLFGQRGLMRS.

The Mg(2+) site is built by glutamate 92, aspartate 111, leucine 113, and aspartate 114. Substrate contacts are provided by residues 114-117 (DGSS) and asparagine 204. Residue glutamate 276 participates in Mg(2+) binding.

The protein belongs to the FBPase class 1 family. In terms of assembly, homotetramer. It depends on Mg(2+) as a cofactor.

It localises to the cytoplasm. It catalyses the reaction beta-D-fructose 1,6-bisphosphate + H2O = beta-D-fructose 6-phosphate + phosphate. The protein operates within carbohydrate biosynthesis; gluconeogenesis. This Methylorubrum extorquens (strain PA1) (Methylobacterium extorquens) protein is Fructose-1,6-bisphosphatase class 1.